The sequence spans 1009 residues: Protein-tyrosine kinase 2-beta (1009 aa).

In terms of domain architecture, FERM spans 39–359; the sequence is RILKVCFYSN…GYCRLQGEHQ (321 aa). Residues Ser361, Ser375, and Ser399 each carry the phosphoserine modification. Tyr402 carries the post-translational modification Phosphotyrosine; by autocatalysis. The Protein kinase domain maps to 425 to 683; that stretch reads VVLNRILGEG…ELVCSLSDVY (259 aa). ATP is bound by residues 431–439, Lys457, and 503–509; these read LGEGFFGEV and ELYPYGE. The active-site Proton acceptor is Asp549. Phosphotyrosine is present on Tyr579. The residue at position 580 (Tyr580) is a Phosphotyrosine; by SRC, FYN and LCK. The segment at 701–725 is disordered; sequence TPKILEPTAFQEPPPKPSRPKYRPP. A compositionally biased stretch (pro residues) spans 712 to 725; it reads EPPPKPSRPKYRPP. Position 722 is a phosphotyrosine (Tyr722). Position 762 is a phosphoserine (Ser762). Position 765 is a phosphothreonine (Thr765). Positions 801–1009 are interaction with TGFB1I1; sequence KVKMRQILDK…LANLAHPPAE (209 aa). Tyr819 and Tyr834 each carry phosphotyrosine. Residue Ser839 is modified to Phosphoserine. Phosphothreonine is present on Thr842. Residue Tyr849 is modified to Phosphotyrosine. Phosphoserine is present on Ser866. A focal adhesion targeting (FAT) region spans residues 868–1009; the sequence is QPTANLDRTD…LANLAHPPAE (142 aa). Tyr881 is subject to Phosphotyrosine; by SRC.

It belongs to the protein kinase superfamily. Tyr protein kinase family. FAK subfamily. As to quaternary structure, homodimer, or homooligomer. Interacts with SIRPA and SH2D3C. Interacts with ARHGAP10. Interacts with DLG4. Interacts with KCNA2. Interacts with NPHP1, ASAP1, ASAP2, ARHGAP26, SKAP2 and TGFB1I1. The Tyr-402 phosphorylated form interacts with SRC (via SH2 domain) and SRC family members. Forms a signaling complex with EPHA1, LCK and phosphatidylinositol 3-kinase; upon activation by EFNA1. Interacts with GRB2 (via SH2 domain). Interacts with P53/TP53 and MDM2. Interacts with MYLK. Interacts with BCAR1. Interacts with PDPK1. Interacts (hypophosphorylated) with PXN. Interacts with RB1CC1. Interacts with RHOU. Interacts with VAV1. Interacts with LPXN and PTPN12. In terms of processing, phosphorylated on tyrosine residues in response to various stimuli that elevate the intracellular calcium concentration; this activation is indirect and may be mediated by production of reactive oxygen species (ROS). Tyr-402 is the major autophosphorylation site, but other kinases can also phosphorylate Tyr-402. Autophosphorylation occurs in trans, i.e. one subunit of the dimeric receptor phosphorylates tyrosine residues on the other subunit. Phosphorylation at Tyr-402 promotes interaction with SRC and SRC family members, leading to phosphorylation at Tyr-579; Tyr-580 and Tyr-881. Phosphorylation at Tyr-881 is important for interaction with GRB2. Phosphorylated on tyrosine residues upon activation of FGR and PKC. Recruitment by NPHP1 to cell matrix adhesions initiates Tyr-402 phosphorylation. In monocytes, adherence to substrata is required for tyrosine phosphorylation and kinase activation. Angiotensin II, thapsigargin and L-alpha-lysophosphatidic acid (LPA) also induce autophosphorylation and increase kinase activity. Phosphorylation by MYLK promotes ITGB2 activation and is thus essential to trigger neutrophil transmigration during lung injury. Dephosphorylated by PTPN12. As to expression, most abundant in the brain, with highest levels in amygdala and hippocampus. Low levels in kidney (at protein level). Also expressed in spleen and lymphocytes.

It is found in the cytoplasm. It localises to the perinuclear region. The protein localises to the cell membrane. The protein resides in the cell junction. Its subcellular location is the focal adhesion. It is found in the cell projection. It localises to the lamellipodium. The protein localises to the cell cortex. The protein resides in the nucleus. It catalyses the reaction L-tyrosyl-[protein] + ATP = O-phospho-L-tyrosyl-[protein] + ADP + H(+). Activated in response to stimuli that lead to increased intracellular Ca(2+) levels; this activation is indirect and may be mediated by calcium-mediated production of reactive oxygen species (ROS). Activated by autophosphorylation at Tyr-402; this creates a binding site for SRC family kinases and leads to phosphorylation at additional tyrosine residues. Phosphorylation at Tyr-402, Tyr-579 and Tyr-580 is required for optimal kinase activity. Inhibited by PF-562,271, BIRB796, PF-4618433 and by PF-431396, PF-2318841 and their derivatives. Inhibited by sulfoximine-substituted trifluoromethylpyrimidines. Inhibited by 4-amino and 5-aryl substituted pyridinone compounds. Functionally, non-receptor protein-tyrosine kinase that regulates reorganization of the actin cytoskeleton, cell polarization, cell migration, adhesion, spreading and bone remodeling. Plays a role in the regulation of the humoral immune response, and is required for normal levels of marginal B-cells in the spleen and normal migration of splenic B-cells. Required for normal macrophage polarization and migration towards sites of inflammation. Regulates cytoskeleton rearrangement and cell spreading in T-cells, and contributes to the regulation of T-cell responses. Promotes osteoclastic bone resorption; this requires both PTK2B/PYK2 and SRC. May inhibit differentiation and activity of osteoprogenitor cells. Functions in signaling downstream of integrin and collagen receptors, immune receptors, G-protein coupled receptors (GPCR), cytokine, chemokine and growth factor receptors, and mediates responses to cellular stress. Forms multisubunit signaling complexes with SRC and SRC family members upon activation; this leads to the phosphorylation of additional tyrosine residues, creating binding sites for scaffold proteins, effectors and substrates. Regulates numerous signaling pathways. Promotes activation of phosphatidylinositol 3-kinase and of the AKT1 signaling cascade. Promotes activation of NOS3. Regulates production of the cellular messenger cGMP. Promotes activation of the MAP kinase signaling cascade, including activation of MAPK1/ERK2, MAPK3/ERK1 and MAPK8/JNK1. Promotes activation of Rho family GTPases, such as RHOA and RAC1. Recruits the ubiquitin ligase MDM2 to P53/TP53 in the nucleus, and thereby regulates P53/TP53 activity, P53/TP53 ubiquitination and proteasomal degradation. Acts as a scaffold, binding to both PDPK1 and SRC, thereby allowing SRC to phosphorylate PDPK1 at 'Tyr-9, 'Tyr-373', and 'Tyr-376'. Promotes phosphorylation of NMDA receptors by SRC family members, and thereby contributes to the regulation of NMDA receptor ion channel activity and intracellular Ca(2+) levels. May also regulate potassium ion transport by phosphorylation of potassium channel subunits. Phosphorylates SRC; this increases SRC kinase activity. Phosphorylates ASAP1, NPHP1, KCNA2 and SHC1. Promotes phosphorylation of ASAP2, RHOU and PXN; this requires both SRC and PTK2/PYK2. The protein is Protein-tyrosine kinase 2-beta (PTK2B) of Homo sapiens (Human).